The primary structure comprises 961 residues: MNFLRGVMGGQSAGPQHTEAETIQKLCDRVASSTLLDDRRNAVRALKSLSKKYRLEVGIQAMEHLIHVLQTDRSDSEIIGYALDTLYNIISNDEEEEVEENSTRQSEDLGSQFTEIFIKQQENVTLLLSLLEEFDFHVRWPGVKLLTSLLKQLGPQVQQIILVSPMGVSRLMDLLADSREVIRNDGVLLLQALTRSNGAIQKIVAFENAFERLLDIITEEGNSDGGIVVEDCLILLQNLLKNNNSNQNFFKEGSYIQRMKPWFEVGDENSGWSAQKVTNLHLMLQLVRVLVSPNNPPGATSSCQKAMFQCGLLQQLCTILMATGVPADILTETINTVSEVIRGCQVNQDYFASVNAPSNPPRPAIVVLLMSMVNERQPFVLRCAVLYCFQCFLYKNQKGQGEIVSTLLPSTIDATGNTVSAGQLLCGGLFSTDSLSNWCAAVALAHALQENATQKEQLLRVQLATSIGNPPVSLLQQCTNILSQGSKIQTRVGLLMLLCTWLSNCPIAVTHFLHNSANVPFLTGQIAENLGEEEQLVQGLCALLLGISIYFNDNSLETYMKEKLKQLIEKRIGKENFIEKLGFISKHELYSRASQKPQPNFPSPEYMIFDHEFTKLVKELEGVITKAIYKSSEEDKKEEEVKKTLEQHDSIVTHYKNMIREQDLQLEELKQQISTLKCQNEQLQTAVTQQVSQIQQHKDQYNLLKVQLGKDSQHQGPYTDGAQMNGVQPEEISRLREEIEELKSNRELLQSQLAEKDSLIENLKSSQLSPGTNEQSSATAGDSEQIAELKQELATLKSQLNSQSVEITKLQTEKQELLQKTEAFAKSAPVPGESETVIATKTTDVEGRLSALLQETKELKNEIKALSEERTAIKEQLDSSNSTIAILQNEKNKLEVDITDSKKEQDDLLVLLADQDQKIFSLKNKLKELGHPVEEEDELESGDQDDEDDEDEDDGKEQGHI.

Positions 1-641 are globular head; that stretch reads MNFLRGVMGG…SEEDKKEEEV (641 aa). ARM repeat units follow at residues 20–60, 61–121, 123–163, 166–207, 208–253, 255–310, 311–354, 363–408, 420–459, 473–513, 518–571, and 573–630; these read AETI…VGIQ, AMEH…IKQQ, NVTL…IILV, MGVS…VAFE, NAFE…FKEG, YIQR…MFQC, GLLQ…FASV, PAIV…STLL, SAGQLLCGGLFSTDSLSNWCAAVALAHALQENATQKEQLL, SLLQ…THFL, NVPF…IEKR, and GKEN…AIYK. The residue at position 50 (serine 50) is a Phosphoserine. Lysine 202 is modified (N6-acetyllysine). The stretch at 642–929 forms a coiled coil; the sequence is KKTLEQHDSI…FSLKNKLKEL (288 aa). Residues 764–782 are compositionally biased toward polar residues; the sequence is KSSQLSPGTNEQSSATAGD. 2 disordered regions span residues 764–784 and 929–961; these read KSSQLSPGTNEQSSATAGDSE and LGHPVEEEDELESGDQDDEDDEDEDDGKEQGHI. Positions 934–955 are enriched in acidic residues; that stretch reads EEEDELESGDQDDEDDEDEDDG. At serine 941 the chain carries Phosphoserine.

It belongs to the VDP/USO1/EDE1 family. In terms of assembly, homodimer. Dimerizes by parallel association of the tails, resulting in an elongated structure with two globular head domains side by side, and a long rod-like tail structure. Interacts with MIF. Post-translationally, phosphorylated in a cell cycle-specific manner; phosphorylated in interphase but not in mitotic cells. Dephosphorylated protein associates with the Golgi membrane; phosphorylation promotes dissociation.

It localises to the cytoplasm. The protein resides in the cytosol. Its subcellular location is the golgi apparatus membrane. General vesicular transport factor required for intercisternal transport in the Golgi stack; it is required for transcytotic fusion and/or subsequent binding of the vesicles to the target membrane. May well act as a vesicular anchor by interacting with the target membrane and holding the vesicular and target membranes in proximity. This Bos taurus (Bovine) protein is General vesicular transport factor p115 (USO1).